A 278-amino-acid polypeptide reads, in one-letter code: Tryptophan synthase alpha chain (278 aa).

Active-site proton acceptor residues include glutamate 49 and aspartate 60.

It belongs to the TrpA family. Tetramer of two alpha and two beta chains.

The enzyme catalyses (1S,2R)-1-C-(indol-3-yl)glycerol 3-phosphate + L-serine = D-glyceraldehyde 3-phosphate + L-tryptophan + H2O. Its pathway is amino-acid biosynthesis; L-tryptophan biosynthesis; L-tryptophan from chorismate: step 5/5. In terms of biological role, the alpha subunit is responsible for the aldol cleavage of indoleglycerol phosphate to indole and glyceraldehyde 3-phosphate. This Granulibacter bethesdensis (strain ATCC BAA-1260 / CGDNIH1) protein is Tryptophan synthase alpha chain.